A 390-amino-acid chain; its full sequence is Coenzyme A biosynthesis bifunctional protein CoaBC (390 aa).

The tract at residues 1-188 (MDKNKHILIG…NQKDYLKNKK (188 aa)) is phosphopantothenoylcysteine decarboxylase. The active-site Proton donor is the Cys156. Residues 189–390 (ILITASRTEE…VAKEILKILY (202 aa)) are phosphopantothenate--cysteine ligase. CTP contacts are provided by residues Asp277, Lys287, 304-307 (PDII), Phe323, Lys338, and Lys342.

This sequence in the N-terminal section; belongs to the HFCD (homo-oligomeric flavin containing Cys decarboxylase) superfamily. In the C-terminal section; belongs to the PPC synthetase family. The cofactor is Mg(2+). Requires FMN as cofactor.

It catalyses the reaction N-[(R)-4-phosphopantothenoyl]-L-cysteine + H(+) = (R)-4'-phosphopantetheine + CO2. The catalysed reaction is (R)-4'-phosphopantothenate + L-cysteine + CTP = N-[(R)-4-phosphopantothenoyl]-L-cysteine + CMP + diphosphate + H(+). It functions in the pathway cofactor biosynthesis; coenzyme A biosynthesis; CoA from (R)-pantothenate: step 2/5. The protein operates within cofactor biosynthesis; coenzyme A biosynthesis; CoA from (R)-pantothenate: step 3/5. Its function is as follows. Catalyzes two sequential steps in the biosynthesis of coenzyme A. In the first step cysteine is conjugated to 4'-phosphopantothenate to form 4-phosphopantothenoylcysteine. In the second step the latter compound is decarboxylated to form 4'-phosphopantotheine. The protein is Coenzyme A biosynthesis bifunctional protein CoaBC of Borreliella burgdorferi (strain ATCC 35210 / DSM 4680 / CIP 102532 / B31) (Borrelia burgdorferi).